The chain runs to 336 residues: Telomere-binding protein cav (336 aa).

The tract at residues Arg-107–Glu-328 is required for binding to Su(var)205. Disordered stretches follow at residues Arg-137–Arg-158 and Ser-199–Gln-218. 2 short sequence motifs (su(var)205-binding Pro-containing repeat) span residues Pro-225–Glu-231 and Pro-289–Glu-295. The span at Met-308 to Ser-327 shows a compositional bias: polar residues. Residues Met-308–Ala-336 are disordered.

Interacts (via C-terminus) with Su(var)205 dimer (via hinge and chromoshadow domain) and with moi to form the terminin, telomere-capping, complex. Interacts with HP6, which is also part of the terminin complex.

It localises to the nucleus. It is found in the chromosome. The protein localises to the telomere. In terms of biological role, binds to chromosome ends in a sequence-dependent manner and is required for telomere capping. This Drosophila sechellia (Fruit fly) protein is Telomere-binding protein cav.